Consider the following 1818-residue polypeptide: Protein encore (1818 aa).

Disordered stretches follow at residues 47 to 68 (ANSSGVGSGSGPGPGSGAGVSG), 123 to 282 (SAAG…NSSN), and 317 to 413 (AERH…GFIS). Positions 52–66 (VGSGSGPGPGSGAGV) are enriched in gly residues. Residues 124 to 137 (AAGSSNLGRQNSFG) show a composition bias toward polar residues. Residues 141–152 (GNMKGKHLTRSH) are compositionally biased toward basic residues. Composition is skewed to low complexity over residues 156 to 179 (ESTSPPRTPTPRAASEQQQQQLQG), 186 to 199 (NNNNINSSSKAQSA), 217 to 233 (QQPQQQQQQQQQQQQSV), and 266 to 282 (NSNGSGMEFNNNNNSSN). Phosphoserine occurs at positions 267 and 270. The segment covering 317-328 (AERHDRHERHEM) has biased composition (basic and acidic residues). Ser-336 bears the Phosphoserine mark. The span at 338 to 348 (NHDEEPYHYEP) shows a compositional bias: basic and acidic residues. Low complexity-rich tracts occupy residues 372–381 (NLGGSSSGSI) and 391–410 (NCNNMSNNGQSNNSSNNTSG). The R3H domain occupies 444–508 (RNILLKIEKD…QCVIVAVAKN (65 aa)). One can recognise an SUZ domain in the interval 510-576 (RIPEIRFQSL…ARSRIFSRTG (67 aa)). Residue Ser-535 is modified to Phosphoserine. Residues 557-568 (FEEREEDYDRAR) are compositionally biased toward basic and acidic residues. 6 disordered regions span residues 557–806 (FEER…SYEQ), 885–916 (QEQEQEPMAGPSSSGSATSSVGITELPSSQTP), 936–959 (PYSQCEVKTPSQNHAPSAAVEEPK), 1176–1249 (GQAP…YNPS), 1332–1648 (AAAG…LVSH), and 1684–1709 (GAGASGAAGSNGGHQPGGGGGARSHI). Residues 592–606 (YGGWEQQQQQQKQSQ) are compositionally biased toward low complexity. Over residues 644-655 (NYGGPPSSGGPG) the composition is skewed to gly residues. The span at 678–695 (QDSTGSTPWRLSPSSSGS) shows a compositional bias: polar residues. The span at 713-771 (SGNQYQSQNQGNSSSGGYNNYRKSSPHQQQQSQQQQQSQQHHQQQLQQPQQLHQQSSQQ) shows a compositional bias: low complexity. The span at 772–784 (YATTELSCSSTES) shows a compositional bias: polar residues. The span at 893-904 (AGPSSSGSATSS) shows a compositional bias: low complexity. A compositionally biased stretch (low complexity) spans 1176–1197 (GQAPMQQQAPHTGAGTTTGPPT). The span at 1220–1231 (SSNGSVVTSSAY) shows a compositional bias: polar residues. Residues 1381–1392 (ASQSAPSTPAAP) show a composition bias toward low complexity. The span at 1430 to 1443 (TPHYYQGQNSNEGY) shows a compositional bias: polar residues. The segment covering 1503-1521 (ASPSSVSLGGASSSGGANS) has biased composition (low complexity). Composition is skewed to polar residues over residues 1554-1565 (AANSSPGVSSYE) and 1579-1596 (FRSQKSMNQDYRRSVSQR). Residues 1608–1633 (SHESSNNSPNSIVGSQSNSAANTPNA) show a composition bias toward low complexity. Gly residues predominate over residues 1684 to 1705 (GAGASGAAGSNGGHQPGGGGGA).

In terms of assembly, interacts with hfp; however, given the nuclear localization of hfp, the relevance of such interaction is unclear. Interacts with CycE, Cul1, and the SCF-proteasome complex. As to expression, expressed in all germline cells of the germarium including the stem cells and dividing cystocytes.

The protein resides in the cytoplasm. Its function is as follows. Required for the regulation of germline mitosis, karyosome formation, and establishment of dorsoventral (DS) polarity of the egg and embryo. Involved in proper grk mRNA localization and translation in the oocyte. May control germline mitosis by facilitating the cyclin E (CycE) proteolysis by the SCF-ubiquitin-proteasome complex. The sequence is that of Protein encore (enc) from Drosophila melanogaster (Fruit fly).